The primary structure comprises 858 residues: Translation initiation factor IF-2 (858 aa).

Residues 59–147 are disordered; the sequence is KEHAEKRRER…GKKLEGQERK (89 aa). The tr-type G domain occupies 361 to 530; sequence PRPPVVVVMG…LLVADLLELK (170 aa). The G1 stretch occupies residues 370-377; that stretch reads GHVDHGKT. 370–377 is a GTP binding site; it reads GHVDHGKT. The G2 stretch occupies residues 395 to 399; the sequence is GITQH. The interval 416 to 419 is G3; it reads DTPG. Residues 416–420 and 470–473 each bind GTP; these read DTPGH and NKID. The tract at residues 470-473 is G4; sequence NKID. The tract at residues 506–508 is G5; that stretch reads SAK.

This sequence belongs to the TRAFAC class translation factor GTPase superfamily. Classic translation factor GTPase family. IF-2 subfamily.

The protein resides in the cytoplasm. In terms of biological role, one of the essential components for the initiation of protein synthesis. Protects formylmethionyl-tRNA from spontaneous hydrolysis and promotes its binding to the 30S ribosomal subunits. Also involved in the hydrolysis of GTP during the formation of the 70S ribosomal complex. The polypeptide is Translation initiation factor IF-2 (Caldicellulosiruptor saccharolyticus (strain ATCC 43494 / DSM 8903 / Tp8T 6331)).